Here is a 301-residue protein sequence, read N- to C-terminus: Mitochondrial carnitine/acylcarnitine carrier protein (301 aa).

At Ala-2 the chain carries N-acetylalanine. The Cytoplasmic segment spans residues 2–12 (AEEPKPISPLK). Solcar repeat units lie at residues 8–99 (ISPL…GKRL), 108–196 (LTYP…LKNL), and 207–293 (LSVP…PMKI). A helical membrane pass occupies residues 13–31 (NLLAGGFGGVCLVFVGHPL). At 32–73 (DTVKVRLQTQPPSLPGQPPMYSGTIDCFRKTLFREGITGLYR) the chain is on the mitochondrial matrix side. A helical membrane pass occupies residues 74–93 (GMAAPIIGVTPMFAVCFFGF). At 94–112 (GLGKRLQQKSPEDELTYPQ) the chain is on the cytoplasmic side. Residues 113 to 131 (LFTAGMLSGVFTTGIMTPG) form a helical membrane-spanning segment. Over 132–170 (ERIKCLLQIQASSGKNKYSGTLDCAKKLYQEFGIRGFYK) the chain is Mitochondrial matrix. Residues Lys-148 and Lys-157 each carry the N6-acetyllysine modification. Lys-170 bears the N6-acetyllysine; alternate mark. Lys-170 is subject to N6-succinyllysine; alternate. A helical membrane pass occupies residues 171-190 (GTALTLMRDVPASGMYFMTY). At 191-211 (EWLKNLFTPQGKSVHDLSVPR) the chain is on the cytoplasmic side. A helical membrane pass occupies residues 212-230 (VLVAGGFRGIFNWVVAIPP). The Mitochondrial matrix portion of the chain corresponds to 231–267 (DVLKSRFQTAPPGKYPNGFRDVLRELIREEGVTSLYK). Residues 268-287 (GFNAVMIRAFPANAACFLGF) form a helical membrane-spanning segment. Residues 288–301 (EIPMKILNWIAPNL) lie on the Cytoplasmic side of the membrane.

The protein belongs to the mitochondrial carrier (TC 2.A.29) family. Post-translationally, the N-terminus is blocked.

It is found in the mitochondrion inner membrane. The enzyme catalyses O-acetyl-(R)-carnitine(in) + (R)-carnitine(out) = O-acetyl-(R)-carnitine(out) + (R)-carnitine(in). The catalysed reaction is an O-acyl-(R)-carnitine(in) + (R)-carnitine(out) = an O-acyl-(R)-carnitine(out) + (R)-carnitine(in). It carries out the reaction O-propanoyl-(R)-carnitine(in) + (R)-carnitine(out) = O-propanoyl-(R)-carnitine(out) + (R)-carnitine(in). It catalyses the reaction O-hexadecanoyl-(R)-carnitine(in) + (R)-carnitine(out) = O-hexadecanoyl-(R)-carnitine(out) + (R)-carnitine(in). The enzyme catalyses O-octanoyl-(R)-carnitine(in) + (R)-carnitine(out) = O-octanoyl-(R)-carnitine(out) + (R)-carnitine(in). The catalysed reaction is (R)-carnitine(in) = (R)-carnitine(out). Its function is as follows. Mediates the electroneutral exchange of acylcarnitines (O-acyl-(R)-carnitine or L-acylcarnitine) of different acyl chain lengths (ranging from O-acetyl-(R)-carnitine to long-chain O-acyl-(R)-carnitines) with free carnitine ((R)-carnitine or L-carnitine) across the mitochondrial inner membrane, via a ping-pong mechanism. Key player in the mitochondrial oxidation pathway, it translocates the fatty acids in the form of acylcarnitines into the mitochondrial matrix, where the carnitine palmitoyltransferase 2 (CPT-2) activates them to undergo fatty acid beta-oxidation. Catalyzes the unidirectional transport (uniport) of carnitine at lower rates than the antiport (exchange). This chain is Mitochondrial carnitine/acylcarnitine carrier protein, found in Rattus norvegicus (Rat).